The primary structure comprises 474 residues: Glutathione synthetase (474 aa).

Ala-2 is modified (N-acetylalanine). Arg-125 lines the substrate pocket. Glu-144 lines the ATP pocket. Mg(2+)-binding residues include Glu-144 and Asn-146. Substrate contacts are provided by residues 148 to 151 (ISAS), 214 to 216 (ERN), Gln-220, and 267 to 270 (RDGY). Residues Lys-305, 364–373 (KPQREGGGNN), Tyr-375, and 398–401 (MEKI) each bind ATP. Residue Glu-368 participates in Mg(2+) binding. A Phosphoserine modification is found at Ser-415. Position 425 (Glu-425) interacts with ATP. Residue Arg-450 coordinates substrate. 2 residues coordinate ATP: Lys-452 and Asp-458. Position 461 to 462 (461 to 462 (VA)) interacts with substrate.

Belongs to the eukaryotic GSH synthase family. As to quaternary structure, homodimer. Mg(2+) is required as a cofactor.

It carries out the reaction gamma-L-glutamyl-L-cysteine + glycine + ATP = glutathione + ADP + phosphate + H(+). It catalyses the reaction gamma-L-glutamyl-(2S)-2-aminobutanoate + glycine + ATP = ophthalmate + ADP + phosphate + H(+). It participates in sulfur metabolism; glutathione biosynthesis; glutathione from L-cysteine and L-glutamate: step 2/2. In terms of biological role, catalyzes the production of glutathione from gamma-glutamylcysteine and glycine in an ATP-dependent manner. Glutathione (gamma-glutamylcysteinylglycine, GSH) is the most abundant intracellular thiol in living aerobic cells and is required for numerous processes including the protection of cells against oxidative damage, amino acid transport, the detoxification of foreign compounds, the maintenance of protein sulfhydryl groups in a reduced state and acts as a cofactor for a number of enzymes. Participates in ophthalmate biosynthesis in hepatocytes. In Rattus norvegicus (Rat), this protein is Glutathione synthetase.